Consider the following 132-residue polypeptide: Putative esterase Ta0293 (132 aa).

It belongs to the thioesterase PaaI family.

In Thermoplasma acidophilum (strain ATCC 25905 / DSM 1728 / JCM 9062 / NBRC 15155 / AMRC-C165), this protein is Putative esterase Ta0293.